Here is a 255-residue protein sequence, read N- to C-terminus: Flap endonuclease Xni (255 aa).

Aspartate 105 provides a ligand contact to Mg(2+). In terms of domain architecture, 5'-3' exonuclease spans glutamine 163–isoleucine 253. The K(+) site is built by leucine 172, alanine 173, proline 181, isoleucine 183, and isoleucine 186. An interaction with DNA region spans residues glycine 185–serine 190.

This sequence belongs to the Xni family. The cofactor is Mg(2+). K(+) serves as cofactor.

In terms of biological role, has flap endonuclease activity. During DNA replication, flap endonucleases cleave the 5'-overhanging flap structure that is generated by displacement synthesis when DNA polymerase encounters the 5'-end of a downstream Okazaki fragment. The sequence is that of Flap endonuclease Xni from Shewanella frigidimarina (strain NCIMB 400).